The primary structure comprises 636 residues: Polyadenylate-binding protein 1 (636 aa).

An N-acetylmethionine modification is found at M1. RRM domains are found at residues 11-89, 99-175, 191-268, and 294-370; these read ASLY…WSQR, GNIF…RFKS, TNVY…RAQK, and VNLY…LAQR. The interval 166–289 is CSDE1-binding; that stretch reads RKVFVGRFKS…FEQMKQDRIT (124 aa). K299 is modified (N6-methyllysine). Position 315 is a phosphoserine (S315). The residue at position 319 (T319) is a Phosphothreonine. R385, R419, R432, and R436 each carry omega-N-methylarginine. Residues R455 and R460 each carry the omega-N-methylated arginine; by CARM1 modification. Residues R475 and R481 each carry the omega-N-methylarginine modification. R493 carries the post-translational modification Asymmetric dimethylarginine; alternate. At R493 the chain carries Dimethylated arginine; alternate. Position 493 is an omega-N-methylarginine; alternate (R493). The residue at position 506 (R506) is an Omega-N-methylarginine. K512 carries the post-translational modification N6-acetyllysine. Residue R518 is modified to Omega-N-methylarginine. The PABC domain occupies 542-619; sequence QEPLTASMLA…AVAVLQAHQA (78 aa).

The protein belongs to the polyadenylate-binding protein type-1 family. As to quaternary structure, may form homodimers. Component of a multisubunit autoregulatory ribonucleoprotein complex (ARC), at least composed of IGF2BP1, PABPC1 and CSDE1. Directly interacts with IGF2BP1. Part of a complex associated with the FOS mCRD domain and consisting of HNRPD, SYNCRIP, PAIP1 and CSDE1/UNR. Interacts with PAIP1 and PAIP2 (via the PABPC1-interacting motifs PAM1 and PAM2). Interacts with PAIP1 with a 1:1 stoichiometry and with PAIP2 with a 1:2 stoichiometry. The interaction with CSDE1 is direct and RNA-independent. Found in a mRNP complex with YBX2. Interacts with TENT2/GLD2. Identified in the spliceosome C complex. Identified in a mRNP complex, at least composed of DHX9, DDX3X, ELAVL1, HNRNPU, IGF2BP1, ILF3, PABPC1, PCBP2, PTBP2, STAU1, STAU2, SYNCRIP and YBX1. The interaction with DDX3X is direct and RNA-independent. This interaction increases in stressed cells and decreases during cell recovery. Identified in a IGF2BP1-dependent mRNP granule complex containing untranslated mRNAs. Interacts with NXF1/TAP. Interacts with PIWIL1. Interacts with AGO1, AGO2, GSPT1 and GSPT2. Interacts with LARP4B. Interacts (via the second and third RRM domains and the C-terminus) with PAIP2B (via central acidic portion and C-terminus). Forms a complex with LARP1 and SHFL. Interacts with LARP4. Interacts with ZFC3H1 in a RNase-sensitive manner. Interacts with TRIM71 (via NHL repeats) in an RNA-dependent manner. Interacts with TENT5C; the interaction has no effect on TENT5C poly(A) polymerase function. Interacts with G3BP1 and G3BP2. Interacts with ENDOV; the interaction is RNA-dependent and stimulates ENDOV activity. Interacts with UPF1; the interaction is RNA-dependent. Interacts with IGF2BP2 and IGF2BP3. May interact with SETX. Interacts with RBM46. Interacts with PAN3. Phosphorylated by MAPKAPK2. In terms of processing, methylated by CARM1. Arg-493 is dimethylated, probably to asymmetric dimethylarginine.

The protein localises to the cytoplasm. The protein resides in the stress granule. Its subcellular location is the nucleus. It localises to the cell projection. It is found in the lamellipodium. Its function is as follows. Binds the poly(A) tail of mRNA, including that of its own transcript, and regulates processes of mRNA metabolism such as pre-mRNA splicing and mRNA stability. Its function in translational initiation regulation can either be enhanced by PAIP1 or repressed by PAIP2. Can probably bind to cytoplasmic RNA sequences other than poly(A) in vivo. Binds to N6-methyladenosine (m6A)-containing mRNAs and contributes to MYC stability by binding to m6A-containing MYC mRNAs. Involved in translationally coupled mRNA turnover. Implicated with other RNA-binding proteins in the cytoplasmic deadenylation/translational and decay interplay of the FOS mRNA mediated by the major coding-region determinant of instability (mCRD) domain. Involved in regulation of nonsense-mediated decay (NMD) of mRNAs containing premature stop codons; for the recognition of premature termination codons (PTC) and initiation of NMD a competitive interaction between UPF1 and PABPC1 with the ribosome-bound release factors is proposed. By binding to long poly(A) tails, may protect them from uridylation by ZCCHC6/ZCCHC11 and hence contribute to mRNA stability. The protein is Polyadenylate-binding protein 1 (PABPC1) of Bos taurus (Bovine).